A 1120-amino-acid chain; its full sequence is DNA-directed RNA polymerase subunit beta (1120 aa).

Belongs to the RNA polymerase beta chain family. In plastids the minimal PEP RNA polymerase catalytic core is composed of four subunits: alpha, beta, beta', and beta''. When a (nuclear-encoded) sigma factor is associated with the core the holoenzyme is formed, which can initiate transcription.

The protein resides in the plastid. Its subcellular location is the chloroplast. It catalyses the reaction RNA(n) + a ribonucleoside 5'-triphosphate = RNA(n+1) + diphosphate. Functionally, DNA-dependent RNA polymerase catalyzes the transcription of DNA into RNA using the four ribonucleoside triphosphates as substrates. This Gracilaria tenuistipitata var. liui (Red alga) protein is DNA-directed RNA polymerase subunit beta.